The sequence spans 198 residues: dITP/XTP pyrophosphatase (198 aa).

Residue 9–14 (SNNAKK) participates in substrate binding. 2 residues coordinate Mg(2+): aspartate 41 and aspartate 70. Aspartate 70 functions as the Proton acceptor in the catalytic mechanism. Substrate contacts are provided by residues serine 71, 153–156 (FGYD), lysine 176, and 181–182 (HR).

This sequence belongs to the HAM1 NTPase family. In terms of assembly, homodimer. Requires Mg(2+) as cofactor.

It catalyses the reaction XTP + H2O = XMP + diphosphate + H(+). It carries out the reaction dITP + H2O = dIMP + diphosphate + H(+). The enzyme catalyses ITP + H2O = IMP + diphosphate + H(+). Pyrophosphatase that catalyzes the hydrolysis of nucleoside triphosphates to their monophosphate derivatives, with a high preference for the non-canonical purine nucleotides XTP (xanthosine triphosphate), dITP (deoxyinosine triphosphate) and ITP. Seems to function as a house-cleaning enzyme that removes non-canonical purine nucleotides from the nucleotide pool, thus preventing their incorporation into DNA/RNA and avoiding chromosomal lesions. The protein is dITP/XTP pyrophosphatase of Aromatoleum aromaticum (strain DSM 19018 / LMG 30748 / EbN1) (Azoarcus sp. (strain EbN1)).